The sequence spans 430 residues: Glutamyl-tRNA reductase (430 aa).

Substrate-binding positions include T50–R53, S108, E113–Q115, and Q119. Residue C51 is the Nucleophile of the active site. G188–A193 contacts NADP(+).

The protein belongs to the glutamyl-tRNA reductase family. In terms of assembly, homodimer.

The enzyme catalyses (S)-4-amino-5-oxopentanoate + tRNA(Glu) + NADP(+) = L-glutamyl-tRNA(Glu) + NADPH + H(+). It participates in porphyrin-containing compound metabolism; protoporphyrin-IX biosynthesis; 5-aminolevulinate from L-glutamyl-tRNA(Glu): step 1/2. Functionally, catalyzes the NADPH-dependent reduction of glutamyl-tRNA(Glu) to glutamate 1-semialdehyde (GSA). This Lawsonia intracellularis (strain PHE/MN1-00) protein is Glutamyl-tRNA reductase.